The chain runs to 158 residues: 6,7-dimethyl-8-ribityllumazine synthase (158 aa).

Residues phenylalanine 24, 58–60 (AFE), and 82–84 (AVI) contribute to the 5-amino-6-(D-ribitylamino)uracil site. 87–88 (GT) contacts (2S)-2-hydroxy-3-oxobutyl phosphate. Histidine 90 functions as the Proton donor in the catalytic mechanism. Phenylalanine 115 serves as a coordination point for 5-amino-6-(D-ribitylamino)uracil. Arginine 129 serves as a coordination point for (2S)-2-hydroxy-3-oxobutyl phosphate.

It belongs to the DMRL synthase family. As to quaternary structure, forms an icosahedral capsid composed of 60 subunits, arranged as a dodecamer of pentamers.

The enzyme catalyses (2S)-2-hydroxy-3-oxobutyl phosphate + 5-amino-6-(D-ribitylamino)uracil = 6,7-dimethyl-8-(1-D-ribityl)lumazine + phosphate + 2 H2O + H(+). It functions in the pathway cofactor biosynthesis; riboflavin biosynthesis; riboflavin from 2-hydroxy-3-oxobutyl phosphate and 5-amino-6-(D-ribitylamino)uracil: step 1/2. In terms of biological role, catalyzes the formation of 6,7-dimethyl-8-ribityllumazine by condensation of 5-amino-6-(D-ribitylamino)uracil with 3,4-dihydroxy-2-butanone 4-phosphate. This is the penultimate step in the biosynthesis of riboflavin. This chain is 6,7-dimethyl-8-ribityllumazine synthase, found in Pseudomonas putida (strain GB-1).